The primary structure comprises 117 residues: Large ribosomal subunit protein uL18 (117 aa).

Basic residues predominate over residues 1 to 17; sequence MNLSRNKARKVKQKRLR. Residues 1–23 form a disordered region; sequence MNLSRNKARKVKQKRLRAKSELS.

This sequence belongs to the universal ribosomal protein uL18 family. As to quaternary structure, part of the 50S ribosomal subunit; part of the 5S rRNA/L5/L18/L25 subcomplex. Contacts the 5S and 23S rRNAs.

This is one of the proteins that bind and probably mediate the attachment of the 5S RNA into the large ribosomal subunit, where it forms part of the central protuberance. This is Large ribosomal subunit protein uL18 from Mycoplasmopsis synoviae (strain 53) (Mycoplasma synoviae).